Consider the following 211-residue polypeptide: MNKRIVVTGTDTGVGKTVFSAGLAGLLGANYWKPVQAGLEQEIDSECIRRLGGLSSDRIVPELYRLRTPASPHHSAEIDGVRIDTETLGLPDSGERRLVIEGAGGLMVPLTARTLYIDIFERWQLPVVLCARTGLGTINHSLLSIEALRKRQIRILGIAFIGERNAETESAVCEIGRVRWLGRLPWLVPLTNDRLQAAFKDSFVSSDFLNL.

13–18 (GVGKTV) provides a ligand contact to ATP. A Mg(2+)-binding site is contributed by T17. K33 is an active-site residue. Mg(2+) contacts are provided by C47 and E101. ATP is bound by residues 101-104 (EGAG), 185-187 (PWL), and N192.

It belongs to the dethiobiotin synthetase family. Homodimer. Mg(2+) is required as a cofactor.

Its subcellular location is the cytoplasm. The catalysed reaction is (7R,8S)-7,8-diammoniononanoate + CO2 + ATP = (4R,5S)-dethiobiotin + ADP + phosphate + 3 H(+). Its pathway is cofactor biosynthesis; biotin biosynthesis; biotin from 7,8-diaminononanoate: step 1/2. Its function is as follows. Catalyzes a mechanistically unusual reaction, the ATP-dependent insertion of CO2 between the N7 and N8 nitrogen atoms of 7,8-diaminopelargonic acid (DAPA, also called 7,8-diammoniononanoate) to form a ureido ring. In Bradyrhizobium diazoefficiens (strain JCM 10833 / BCRC 13528 / IAM 13628 / NBRC 14792 / USDA 110), this protein is ATP-dependent dethiobiotin synthetase BioD.